The primary structure comprises 661 residues: tRNA uridine 5-carboxymethylaminomethyl modification enzyme MnmG (661 aa).

FAD contacts are provided by residues 16–21, Val128, and Ser183; that span reads GAGHAG. The tract at residues 206 to 230 is disordered; it reads PRVNGNTIDYSKTEEEPGDKTPRHF. Residues 216–230 show a composition bias toward basic and acidic residues; it reads SKTEEEPGDKTPRHF. An NAD(+)-binding site is contributed by 277–291; the sequence is GPRYCPSIEDKVVRF. Gln374 serves as a coordination point for FAD.

Belongs to the MnmG family. As to quaternary structure, homodimer. Heterotetramer of two MnmE and two MnmG subunits. The cofactor is FAD.

It localises to the cytoplasm. In terms of biological role, NAD-binding protein involved in the addition of a carboxymethylaminomethyl (cmnm) group at the wobble position (U34) of certain tRNAs, forming tRNA-cmnm(5)s(2)U34. The polypeptide is tRNA uridine 5-carboxymethylaminomethyl modification enzyme MnmG (Lactobacillus helveticus (strain DPC 4571)).